The primary structure comprises 299 residues: Taste receptor type 2 member 50 (299 aa).

Position 1 (Met-1) is a topological domain, extracellular. The chain crosses the membrane as a helical span at residues 2-22 (IPFLHIFFSVLILVLFVLGNF). The Cytoplasmic segment spans residues 23–55 (ANGFIALVNFIDWVKRKKISLADQILTALAVSR). The helical transmembrane segment at 56–76 (VGLLWALLLNWYLTELNPAFY) threads the bilayer. The Extracellular segment spans residues 77–87 (SVELRITSYNA). A helical membrane pass occupies residues 88–108 (WVVTNHFSMWLAASLSIFYLL). Residues 109–126 (KIANFSNLSFLNLKRRVR) are Cytoplasmic-facing. Residues 127–147 (SIILVILLGSLLFLVCHLLAV) traverse the membrane as a helical segment. Topologically, residues 148 to 181 (NMDENMWTEEYEGNMTGKMKLRNAAHLSYMTVTT) are extracellular. N-linked (GlcNAc...) asparagine glycosylation is present at Asn-161. A helical membrane pass occupies residues 182–202 (LWSFIPFMLSLISFLMLIFSL). Topologically, residues 203–229 (CKHLKKMQLHGEGSRDPSTTVHIKALQ) are cytoplasmic. Residues 230–250 (TLISFLLLCAIFFLFLIISVW) form a helical membrane-spanning segment. Residues 251–259 (SPRRLQNEP) are Extracellular-facing. The chain crosses the membrane as a helical span at residues 260-280 (VFMVCKAVGNIYLSFDSFVLI). Residues 281 to 299 (WRTKKLKHIFLLILCQIRC) lie on the Cytoplasmic side of the membrane.

This sequence belongs to the G-protein coupled receptor T2R family.

It is found in the membrane. Functionally, receptor that may play a role in the perception of bitterness and is gustducin-linked. May play a role in sensing the chemical composition of the gastrointestinal content. The activity of this receptor may stimulate alpha gustducin, mediate PLC-beta-2 activation and lead to the gating of TRPM5. The protein is Taste receptor type 2 member 50 (TAS2R50) of Macaca mulatta (Rhesus macaque).